A 670-amino-acid polypeptide reads, in one-letter code: DEAD-box ATP-dependent RNA helicase 16 (670 aa).

Low complexity predominate over residues 1-10 (MAAAAAASSM). Positions 1–97 (MAAAAAASSM…EEREVSFDEL (97 aa)) are disordered. 2 stretches are compositionally biased toward basic and acidic residues: residues 18–30 (AATEQEVENHDEA) and 40–49 (NDGHTAHAAE). Positions 92–120 (VSFDELGLDEQLKRALRKKGLDKATPIQR) match the Q motif motif. The region spanning 123–306 (IPLILEGKDV…KLLLHNPFIL (184 aa)) is the Helicase ATP-binding domain. Residue 136 to 143 (AKTGSGKT) participates in ATP binding. Residues 254-257 (DEAD) carry the DEAD box motif. One can recognise a Helicase C-terminal domain in the interval 340–523 (LVLLKLELIQ…PFPLLTKNAV (184 aa)). Residues 616-670 (DIDKPRRRKRMGFKGGSGRSSDPLKTFSAEGKSRRRGRKERDGEQDRRKRKKVES) are disordered. Basic and acidic residues predominate over residues 654–670 (KERDGEQDRRKRKKVES).

The protein belongs to the DEAD box helicase family. DDX56/DBP9 subfamily.

It catalyses the reaction ATP + H2O = ADP + phosphate + H(+). This is DEAD-box ATP-dependent RNA helicase 16 from Oryza sativa subsp. japonica (Rice).